A 93-amino-acid polypeptide reads, in one-letter code: uncharacterized protein (93 aa).

This sequence to E.coli YdbD C-terminal region.

This is an uncharacterized protein from Escherichia coli (strain K12).